Consider the following 415-residue polypeptide: Peptide chain release factor subunit 1 (415 aa).

It belongs to the eukaryotic release factor 1 family. As to quaternary structure, heterodimer of two subunits, one of which binds GTP.

The protein resides in the cytoplasm. Functionally, directs the termination of nascent peptide synthesis (translation) in response to the termination codons UAA, UAG and UGA. In Thermococcus sibiricus (strain DSM 12597 / MM 739), this protein is Peptide chain release factor subunit 1.